The chain runs to 99 residues: Large ribosomal subunit protein bL27 (99 aa).

The tract at residues 13–65 is disordered; that stretch reads AHHKGGGSTTNGRNSAGRRLGAKRADGQEVHAGSIIYRQRGTKIHPGKNVGRG.

It belongs to the bacterial ribosomal protein bL27 family.

This chain is Large ribosomal subunit protein bL27, found in Lactobacillus delbrueckii subsp. bulgaricus (strain ATCC BAA-365 / Lb-18).